The following is a 413-amino-acid chain: von Willebrand factor A domain-containing protein 1 (413 aa).

The N-terminal stretch at 1–20 is a signal peptide; it reads MLPWTVIGLALSLRLARSGA. A VWFA domain is found at 32 to 211; the sequence is DLLFLLDSSA…ALRGSILDAM (180 aa). 3 positions are modified to phosphoserine: S72, S78, and S91. Fibronectin type-III domains lie at 212 to 302 and 305 to 395; these read WPQQ…TLPE and GPEL…TPEG. N262 carries an N-linked (GlcNAc...) asparagine glycan. The tract at residues 385-413 is disordered; that stretch reads ALSAKACTPEGERSRAPRPQPQRTGGREP.

In terms of assembly, homodimer or homomultimer; disulfide-linked. Interacts with HSPG2. N-glycosylated.

It is found in the secreted. Its subcellular location is the extracellular space. It localises to the extracellular matrix. The protein resides in the basement membrane. In terms of biological role, promotes matrix assembly. Involved in the organization of skeletal muscles and in the formation of neuromuscular junctions. This Bos taurus (Bovine) protein is von Willebrand factor A domain-containing protein 1 (VWA1).